Here is a 507-residue protein sequence, read N- to C-terminus: Transcription factor SOX-9 (507 aa).

2 disordered regions span residues 1–67 (MNLL…SEED) and 160–250 (RLRV…AGKV). Low complexity predominate over residues 30-41 (SAGSPCPSGSGS). Polar residues predominate over residues 42 to 52 (DTENTRPQENT). Basic and acidic residues-rich tracts occupy residues 56-67 (GEPDLKKESEED) and 160-174 (RLRV…DYKY). The segment at 63-103 (ESEEDKFPVCIREAVSQVLKGYDWTLVPMPVRVNGSSKNKP) is dimerization (DIM). The interval 63-103 (ESEEDKFPVCIREAVSQVLKGYDWTLVPMPVRVNGSSKNKP) is PQA. Serine 64 carries the post-translational modification Phosphoserine. The segment at residues 105–173 (VKRPMNAFMV…QHKKDHPDYK (69 aa)) is a DNA-binding region (HMG box). Serine 211 carries the post-translational modification Phosphoserine. The tract at residues 224 to 307 (PGEHSGQSQG…LPPNGHPGVP (84 aa)) is transactivation domain (TAM). 2 short sequence motifs (9aaTAD) span residues 275 to 284 (IGELSSDVIS) and 290 to 298 (DVNEFDQYL). The tract at residues 335–429 (WMSKQQAPPP…PFNLPHYNPS (95 aa)) is disordered. The span at 341-369 (APPPPPQQPPQAPQAPQAPPQQQAPPQPQ) shows a compositional bias: pro residues. The segment covering 378 to 420 (HTLTTLSSEPGQSQRTHIKTEQLSPSHYSEQQQHSPQQISYSP) has biased composition (polar residues). The transactivation domain (TAC) stretch occupies residues 392–507 (RTHIKTEQLS…QPVYTQLTRP (116 aa)). Lysine 396 is covalently cross-linked (Glycyl lysine isopeptide (Lys-Gly) (interchain with G-Cter in ubiquitin)). The 9aaTAD 3 motif lies at 458 to 466 (SGLYSTFTY). Residues 477–507 (PIADTSGVPSIPQTHSPQHWEQPVYTQLTRP) form a disordered region. Positions 483-507 (GVPSIPQTHSPQHWEQPVYTQLTRP) are enriched in polar residues.

As to quaternary structure, homodimer; homodimerization is required for activity. Interacts (via C-terminus) with ZNF219; forming a complex that binds to the COL2A1 promoter and activates COL2A1 expression. Interacts with DDRGK1. Interacts with EP300/p300. Interacts with beta-catenin (CTNNB1); inhibiting CTNNB1 activity by competing with the binding sites of TCF/LEF within CTNNB1. Post-translationally, acetylated; acetylation impairs nuclear localization and ability to transactivate expression of target genes. Deacetylated by SIRT1. In terms of processing, phosphorylation at Ser-64 and Ser-211 by PKA increases transcriptional activity and may help delay chondrocyte maturation downstream of PTHLH/PTHrP signaling. Phosphorylation at either Ser-64 or Ser-211 is required for sumoylation, but phosphorylation is not dependent on sumoylation. Phosphorylated on tyrosine residues; tyrosine dephosphorylation by PTPN11/SHP2 blocks SOX9 phosphorylation by PKA and subsequent SUMOylation. Sumoylated; phosphorylation at either Ser-64 or Ser-211 is required for sumoylation. Sumoylation is induced by BMP signaling pathway. Post-translationally, ubiquitinated; ubiquitination leads to proteasomal degradation and is negatively regulated by DDRGK1.

The protein resides in the nucleus. Functionally, transcription factor that plays a key role in chondrocytes differentiation and skeletal development. Specifically binds the 5'-ACAAAG-3' DNA motif present in enhancers and super-enhancers and promotes expression of genes important for chondrogenesis, including cartilage matrix protein-coding genes COL2A1, COL4A2, COL9A1, COL11A2 and ACAN, SOX5 and SOX6. Also binds to some promoter regions. Plays a central role in successive steps of chondrocyte differentiation. Absolutely required for precartilaginous condensation, the first step in chondrogenesis during which skeletal progenitors differentiate into prechondrocytes. Together with SOX5 and SOX6, required for overt chondrogenesis when condensed prechondrocytes differentiate into early stage chondrocytes, the second step in chondrogenesis. Later, required to direct hypertrophic maturation and block osteoblast differentiation of growth plate chondrocytes: maintains chondrocyte columnar proliferation, delays prehypertrophy and then prevents osteoblastic differentiation of chondrocytes by lowering beta-catenin (CTNNB1) signaling and RUNX2 expression. Also required for chondrocyte hypertrophy, both indirectly, by keeping the lineage fate of chondrocytes, and directly, by remaining present in upper hypertrophic cells and transactivating COL10A1 along with MEF2C. Low lipid levels are the main nutritional determinant for chondrogenic commitment of skeletal progenitor cells: when lipids levels are low, FOXO (FOXO1 and FOXO3) transcription factors promote expression of SOX9, which induces chondrogenic commitment and suppresses fatty acid oxidation. Mechanistically, helps, but is not required, to remove epigenetic signatures of transcriptional repression and deposit active promoter and enhancer marks at chondrocyte-specific genes. Acts in cooperation with the Hedgehog pathway-dependent GLI (GLI1 and GLI3) transcription factors. In addition to cartilage development, also acts as a regulator of proliferation and differentiation in epithelial stem/progenitor cells: involved in the lung epithelium during branching morphogenesis, by balancing proliferation and differentiation and regulating the extracellular matrix. Controls epithelial branching during kidney development. The chain is Transcription factor SOX-9 from Rattus norvegicus (Rat).